The following is a 144-amino-acid chain: Large ribosomal subunit protein uL15 (144 aa).

The disordered stretch occupies residues 1–53; the sequence is MRLNTLSPAQGAKQAPKRVGRGIGSGLGKTGGRGHKGQNSRTGGGVRRGFEGG. Gly residues predominate over residues 21–31; the sequence is RGIGSGLGKTG.

Belongs to the universal ribosomal protein uL15 family. In terms of assembly, part of the 50S ribosomal subunit.

Binds to the 23S rRNA. The sequence is that of Large ribosomal subunit protein uL15 from Hamiltonella defensa subsp. Acyrthosiphon pisum (strain 5AT).